Here is a 199-residue protein sequence, read N- to C-terminus: Probable nicotinate-nucleotide adenylyltransferase (199 aa).

The protein belongs to the NadD family.

It carries out the reaction nicotinate beta-D-ribonucleotide + ATP + H(+) = deamido-NAD(+) + diphosphate. It functions in the pathway cofactor biosynthesis; NAD(+) biosynthesis; deamido-NAD(+) from nicotinate D-ribonucleotide: step 1/1. Functionally, catalyzes the reversible adenylation of nicotinate mononucleotide (NaMN) to nicotinic acid adenine dinucleotide (NaAD). This Roseiflexus castenholzii (strain DSM 13941 / HLO8) protein is Probable nicotinate-nucleotide adenylyltransferase.